The primary structure comprises 430 residues: Endo-beta-1,4-glucanase celB (430 aa).

A signal peptide spans 1–16; the sequence is MALLLSLSLLATTISA. Asparagine 43 and asparagine 153 each carry an N-linked (GlcNAc...) asparagine glycan. Glutamate 216 serves as the catalytic Nucleophile. Glutamate 221 (proton donor) is an active-site residue. A glycan (N-linked (GlcNAc...) asparagine) is linked at asparagine 395.

This sequence belongs to the glycosyl hydrolase 7 (cellulase C) family.

Its subcellular location is the secreted. The enzyme catalyses Endohydrolysis of (1-&gt;4)-beta-D-glucosidic linkages in cellulose, lichenin and cereal beta-D-glucans.. Functionally, has endoglucanase activity on substrates containing beta-1,4 glycosidic bonds, like in carboxymethylcellulose (CMC), hydroxyethylcellulose (HEC) and beta-glucan. Involved in the degradation of complex natural cellulosic substrates. The polypeptide is Endo-beta-1,4-glucanase celB (celB) (Emericella nidulans (strain FGSC A4 / ATCC 38163 / CBS 112.46 / NRRL 194 / M139) (Aspergillus nidulans)).